Here is a 515-residue protein sequence, read N- to C-terminus: UBP3-associated protein BRE5 (515 aa).

An NTF2 domain is found at 8-140; sequence ICFAFLQNYY…FDITNDIIRF (133 aa). Over residues 157 to 166 the composition is skewed to low complexity; it reads QSNEENSVSA. 2 disordered regions span residues 157 to 410 and 485 to 515; these read QSNE…PVFS and KTVK…KRKD. Residues 168 to 201 are compositionally biased toward basic and acidic residues; sequence EEDKIRHESGVEKEKEKEKSPEISKPKAKKETVK. At Ser187 the chain carries Phosphoserine. Over residues 202–213 the composition is skewed to polar residues; that stretch reads DTTAPTESSTQE. Composition is skewed to basic and acidic residues over residues 262–282 and 299–319; these read LNEK…KEGS and EVSD…EIKP. Residue Ser282 is modified to Phosphoserine. Residues 330–341 are compositionally biased toward polar residues; sequence SGNNASTPSSSP. Thr336 is modified (phosphothreonine). Position 340 is a phosphoserine (Ser340). Basic and acidic residues predominate over residues 374–396; it reads IRPETLPKKPTERKFEMGNRRDN. Ser398 bears the Phosphoserine mark. The RRM domain maps to 418-494; it reads YPIYIRGTNG…KTVKKPTSNN (77 aa). Positions 489 to 503 are enriched in polar residues; the sequence is KPTSNNPPGIFTNGT. The span at 504–515 shows a compositional bias: basic residues; the sequence is RSHRKQPLKRKD.

As to quaternary structure, heterotetramer with UBP3; contains two molecules of BRE5 and two molecules of UBP3. Forms a complex composed of CDC48, DOA1, deubiquitinase UBP3 and probably BRE5. Within the complex, interacts (via C-terminus) with CDC48; the interaction is direct and UBP3-independent.

In terms of biological role, has a role in de-ubiquitination. In conjunction with UBP3, cleaves ubiquitin, leading to the subsequent mono-ubiquitination of sec23. The chain is UBP3-associated protein BRE5 (BRE5) from Saccharomyces cerevisiae (strain ATCC 204508 / S288c) (Baker's yeast).